The sequence spans 380 residues: F-box/kelch-repeat protein At3g18720 (380 aa).

Positions 47-94 (LWDKQIPTDLLQEILSRLGLKANIHASLVCKTWLKEAVSVRKFQSRPW) constitute an F-box domain. Kelch repeat units follow at residues 190–233 (CVIS…INRC) and 234–279 (IFSN…LVRQ).

This chain is F-box/kelch-repeat protein At3g18720, found in Arabidopsis thaliana (Mouse-ear cress).